A 461-amino-acid chain; its full sequence is Cysteine--tRNA ligase (461 aa).

Cys28 contacts Zn(2+). A 'HIGH' region motif is present at residues 30 to 40 (ITVYDLCHIGH). Residues Cys209, His234, and Glu238 each contribute to the Zn(2+) site. Residues 266–270 (KMSKS) carry the 'KMSKS' region motif. Residue Lys269 coordinates ATP.

Belongs to the class-I aminoacyl-tRNA synthetase family. In terms of assembly, monomer. Requires Zn(2+) as cofactor.

It is found in the cytoplasm. It carries out the reaction tRNA(Cys) + L-cysteine + ATP = L-cysteinyl-tRNA(Cys) + AMP + diphosphate. The chain is Cysteine--tRNA ligase from Salmonella dublin (strain CT_02021853).